Reading from the N-terminus, the 510-residue chain is Cytochrome P450 705A20 (510 aa).

The chain crosses the membrane as a helical span at residues 7–27; it reads QHCFSFILLCFFSLLCYSLLF.

Belongs to the cytochrome P450 family. The cofactor is heme.

It is found in the membrane. The polypeptide is Cytochrome P450 705A20 (CYP705A20) (Arabidopsis thaliana (Mouse-ear cress)).